Reading from the N-terminus, the 445-residue chain is Phosphoglucosamine mutase (445 aa).

Serine 102 serves as the catalytic Phosphoserine intermediate. Serine 102, aspartate 240, aspartate 242, and aspartate 244 together coordinate Mg(2+). Serine 102 carries the phosphoserine modification.

It belongs to the phosphohexose mutase family. Mg(2+) serves as cofactor. In terms of processing, activated by phosphorylation.

The enzyme catalyses alpha-D-glucosamine 1-phosphate = D-glucosamine 6-phosphate. In terms of biological role, catalyzes the conversion of glucosamine-6-phosphate to glucosamine-1-phosphate. In Mycolicibacterium gilvum (strain PYR-GCK) (Mycobacterium gilvum (strain PYR-GCK)), this protein is Phosphoglucosamine mutase.